The primary structure comprises 563 residues: Type 2 DNA topoisomerase 6 subunit B (563 aa).

Residues asparagine 46, aspartate 78, 99–100 (TK), 109–116 (GQQGIGIS), and lysine 471 each bind ATP.

The protein belongs to the TOP6B family. As to quaternary structure, homodimer. Heterotetramer of two Top6A and two Top6B chains.

It carries out the reaction ATP-dependent breakage, passage and rejoining of double-stranded DNA.. In terms of biological role, relaxes both positive and negative superturns and exhibits a strong decatenase activity. The chain is Type 2 DNA topoisomerase 6 subunit B from Thermococcus onnurineus (strain NA1).